The primary structure comprises 431 residues: Probable pectate lyase 1 (431 aa).

Residues 1 to 20 (MAVLPTWLLAMMCLLFFVGA) form the signal peptide. 3 N-linked (GlcNAc...) asparagine glycosylation sites follow: Asn-23, Asn-28, and Asn-65. Asp-227, Asp-251, and Asp-255 together coordinate Ca(2+). The active site involves Arg-307.

This sequence belongs to the polysaccharide lyase 1 family. Ca(2+) is required as a cofactor. Expressed in flowers, but not in leaves.

It carries out the reaction Eliminative cleavage of (1-&gt;4)-alpha-D-galacturonan to give oligosaccharides with 4-deoxy-alpha-D-galact-4-enuronosyl groups at their non-reducing ends.. It functions in the pathway glycan metabolism; pectin degradation; 2-dehydro-3-deoxy-D-gluconate from pectin: step 2/5. This is Probable pectate lyase 1 from Arabidopsis thaliana (Mouse-ear cress).